We begin with the raw amino-acid sequence, 114 residues long: Protein ORF3 (114 aa).

The tract at residues 1-28 is membrane association; sequence MGSRPCALGLFCCCSSCFCLCCPRHRPV. Hydrophobic regions lie at residues 6–22 and 33–53; these read CALG…CLCC and AAVG…GLIL. The tract at residues 6–22 is induction of host SIRPA expression; that stretch reads CALGLFCCCSSCFCLCC. The segment at 28-68 is interaction with host HPX; sequence VSRLAAAVGGAAAVPAVVSGVTGLILSPSQSPIFIQPTPSP. Residues 48-72 are interaction with the capsid protein; the sequence is VTGLILSPSQSPIFIQPTPSPPMSP. S71 is subject to Phosphoserine; by host. The segment at 72–114 is homodimerization, and interaction with host AMBP/bikunin; that stretch reads PLRPGLDLVFANPPDHSAPLGVTRPSAPPLPHVVDLPQLGPRR. The segment at 91-114 is disordered; that stretch reads LGVTRPSAPPLPHVVDLPQLGPRR. The segment at 95–104 is interaction with host SRC, HCK, FYN, PIK3R3 and GRB2; sequence RPSAPPLPHV. Residues 96 to 99 carry the PTAP/PSAP motif motif; that stretch reads PSAP.

The protein belongs to the hepevirus ORF3 protein family. In terms of assembly, forms homooligomers. Interacts with host SRC, HCK, FYN, PIK3R3 and GRB2 (via SH3 domain); binding does not activate the kinases. Interacts with host AMBP/bikunin and AMBP/alpha-1-microglobulin peptides. Interacts with host HPX/hemopexin. Interacts (when phosphorylated) with capsid protein ORF2. Interacts with host TSG101; this interaction plays a role in viral release from the host cell. Interacts with host SIRPA; this interaction down-regulates the phosphorylation of host IRF3. In terms of processing, palmitoylated in the N-terminus.

Its subcellular location is the host endoplasmic reticulum membrane. The protein localises to the host cytoplasm. It localises to the host cytoskeleton. The protein resides in the virion. It is found in the host cell membrane. In terms of biological role, small multifunctional phosphoprotein involved in virion morphogenesis, egress and counteracting host innate immunity. Plays critical roles in the final steps of viral release by interacting with host TSG101, a member of the vacuolar protein-sorting pathway and using other cellular host proteins involved in vesicle formation pathway. Also acts as a viroporin and forms ion conductive pores allowing viral particle release. Impairs the generation of type I interferon by down-regulating host TLR3 and TLR7 as well as their downstream signaling pathways. Down-regulates the phosphorylation of host IRF3 via the interaction with host SIRP-alpha, thereby inhibiting IFN-I expression. Interacts with host microtubules. The polypeptide is Protein ORF3 (Hepatitis E virus genotype 1 (isolate Human/China/HeBei/1987) (HEV)).